Here is a 299-residue protein sequence, read N- to C-terminus: MTTVNLAAYRFVSLDSIEQWRPLVAARCNTLGLRGTILLAPEGINLFIAGPREATDAFVDYIRHDPLFEGKFADLPFKESLSDSQPFRRMLVRLKREIITMKKPAIKPELGRAPSVDARTLKAWLDQGHDDASRPVVMLDTRNAFEVDVGTFDRALDYRIDKFSEFPAVIEANRADLEGKTIVSFCTGGIRCEKAAIHMKDVGIENVYQLEGGILKYFEEVGGAHYHGDCFVFDYRTALNPQLAPTADVTCFACRAVVPADAQQSPLYVPGKCCPACHPGDSGTPGRRAEPGAEPARAV.

Residues 132 to 226 (ASRPVVMLDT…YFEEVGGAHY (95 aa)) form the Rhodanese domain. The active-site Cysteine persulfide intermediate is the Cys186.

Belongs to the TrhO family.

The enzyme catalyses uridine(34) in tRNA + AH2 + O2 = 5-hydroxyuridine(34) in tRNA + A + H2O. In terms of biological role, catalyzes oxygen-dependent 5-hydroxyuridine (ho5U) modification at position 34 in tRNAs. The chain is tRNA uridine(34) hydroxylase from Burkholderia pseudomallei (strain K96243).